Consider the following 193-residue polypeptide: Homeobox protein HD-12 (193 aa).

A DNA-binding region (homeobox; TALE-type) is located at residues 123-185; the sequence is SVIRRINFPK…NARRRILPFM (63 aa).

The protein belongs to the TALE/KNOX homeobox family.

It is found in the nucleus. This Encephalitozoon cuniculi (strain GB-M1) (Microsporidian parasite) protein is Homeobox protein HD-12 (HD-12).